The sequence spans 116 residues: Nucleoid-associated protein P9301_00191 (116 aa).

Belongs to the YbaB/EbfC family. Homodimer.

The protein resides in the cytoplasm. It is found in the nucleoid. In terms of biological role, binds to DNA and alters its conformation. May be involved in regulation of gene expression, nucleoid organization and DNA protection. The sequence is that of Nucleoid-associated protein P9301_00191 from Prochlorococcus marinus (strain MIT 9301).